Consider the following 336-residue polypeptide: Isopentenyl-diphosphate delta-isomerase (336 aa).

Position 5–6 (5–6 (RK)) interacts with substrate. FMN contacts are provided by residues 60–62 (AMT), S90, and N117. Position 147 (Q147) interacts with substrate. E148 lines the Mg(2+) pocket. FMN-binding positions include K179, S204, T209, 253-255 (GVR), and 274-275 (SR).

Belongs to the IPP isomerase type 2 family. As to quaternary structure, homooctamer. Dimer of tetramers. FMN serves as cofactor. NADPH is required as a cofactor. Requires Mg(2+) as cofactor.

It localises to the cytoplasm. The enzyme catalyses isopentenyl diphosphate = dimethylallyl diphosphate. Functionally, involved in the biosynthesis of isoprenoids. Catalyzes the 1,3-allylic rearrangement of the homoallylic substrate isopentenyl (IPP) to its allylic isomer, dimethylallyl diphosphate (DMAPP). In Streptococcus pneumoniae serotype 4 (strain ATCC BAA-334 / TIGR4), this protein is Isopentenyl-diphosphate delta-isomerase.